An 845-amino-acid polypeptide reads, in one-letter code: Protein translocase subunit SecA 1 (845 aa).

ATP is bound by residues glutamine 85, glycine 103–threonine 107, and aspartate 492.

Belongs to the SecA family. In terms of assembly, monomer and homodimer. Part of the essential Sec protein translocation apparatus which comprises SecA, SecYEG and auxiliary proteins SecDF. Other proteins may also be involved.

The protein localises to the cell membrane. It is found in the cytoplasm. The catalysed reaction is ATP + H2O + cellular proteinSide 1 = ADP + phosphate + cellular proteinSide 2.. In terms of biological role, part of the Sec protein translocase complex. Interacts with the SecYEG preprotein conducting channel. Has a central role in coupling the hydrolysis of ATP to the transfer of proteins into and across the cell membrane, serving as an ATP-driven molecular motor driving the stepwise translocation of polypeptide chains across the membrane. This chain is Protein translocase subunit SecA 1, found in Corynebacterium efficiens (strain DSM 44549 / YS-314 / AJ 12310 / JCM 11189 / NBRC 100395).